We begin with the raw amino-acid sequence, 292 residues long: Hydroxysqualene synthase (292 aa).

It belongs to the phytoene/squalene synthase family. HpnC subfamily.

It catalyses the reaction presqualene diphosphate + H2O = hydroxysqualene + diphosphate. It participates in secondary metabolite biosynthesis; hopanoid biosynthesis. Involved in the biosynthesis of the hopanoid precursor squalene (SQ) from farnesyl diphosphate (FPP). Catalyzes the second step, the conversion of presqualene diphosphate (PSPP) to hydroxysqualene (HSQ). This Sinorhizobium fredii (strain NBRC 101917 / NGR234) protein is Hydroxysqualene synthase.